A 390-amino-acid polypeptide reads, in one-letter code: MRLRFPMKSAVLAFAIFLVFIPLFSVGIRMIPGRLTAVSATVGNGFDLGSFVEAPEYRNGKECVSQSLNRENFVSSCDASLVHVAMTLDSEYLRGSIAAVHSMLRHASCPENVFFHLIAAEFDPASPRVLSQLVRSTFPSLNFKVYIFREDTVINLISSSIRQALENPLNYARNYLGDILDPCVDRVIYLDSDIIVVDDITKLWNTSLTGSRIIGAPEYCHANFTKYFTSGFWSDPALPGFFSGRKPCYFNTGVMVMDLVRWREGNYREKLETWMQIQKKKRIYDLGSLPPFLLVFAGNVEAIDHRWNQHGLGGDNVRGSCRSLHKGPVSLLHWSGKGKPWVRLDEKRPCPLDHLWEPYDLYEHKIERAKDQSLFGFSSLSELTEDSSFF.

Residues 1–10 (MRLRFPMKSA) lie on the Cytoplasmic side of the membrane. The chain crosses the membrane as a helical; Signal-anchor for type II membrane protein span at residues 11 to 31 (VLAFAIFLVFIPLFSVGIRMI). The Lumenal portion of the chain corresponds to 32–390 (PGRLTAVSAT…SELTEDSSFF (359 aa)). 2 N-linked (GlcNAc...) asparagine glycosylation sites follow: Asn205 and Asn223.

Belongs to the glycosyltransferase 8 family.

It is found in the golgi apparatus membrane. It participates in glycan metabolism; pectin biosynthesis. Functionally, may be involved in pectin and/or xylans biosynthesis in cell walls. The sequence is that of Probable galacturonosyltransferase-like 9 (GATL9) from Arabidopsis thaliana (Mouse-ear cress).